A 598-amino-acid polypeptide reads, in one-letter code: MVRDRVIELFRKALAQGADDGRWPAAGAGFSVEAPRDPKHGDFAVNAAMVLAKQAGRPPRELAQAIVEAVRAADTAGDLAGLEIAGPGFINVRLSPDLWLRTLARAVAEGPDYGRTAVGQGKKVIVEYVSANPTGPMHVGHGRNAVVGDGVQGLLRWAGFDVTREYYVNDYGAQVQTLARSVHLRYQELHGRTVTMPPKSYPGEYVKDIAAGLKAEYGARFLDAPEAEWLTLFRDHSVQHVLGMIRGDLAAVNISFDRWSSEKALYESGTVDRFLRFLEEKDLVYVGKLPPPKSKKGQPPPQPQPDEEGVTAAEDLTLFRSSAYGDEVDRPVKKADGTPTYFCADIAYHWDKRQRADALVDVLGADHGGYVPRLEAAMEALGASRKDLHVVLIQMVSLMRGGESVKMSKRAGTLVSLREVVDEVGRDATRFIFLTRRSDAPLDFDVELAKRQTLDNPVFYVQYGHARLAAIFQKAREAGHAVPDFDLEAARTLASPEEQDLIRRIAAFPDMLAAAALAYEPHRVAFYLQETIAAFHSWYTQGKKSGEKVIGPDPVKTAARLFLCRALKQVLANGLAVLGVSAPDRMESPETRDIADDV.

Residues 131-141 (ANPTGPMHVGH) carry the 'HIGH' region motif. Residues 288-309 (KLPPPKSKKGQPPPQPQPDEEG) form a disordered region.

Belongs to the class-I aminoacyl-tRNA synthetase family. As to quaternary structure, monomer.

It localises to the cytoplasm. It catalyses the reaction tRNA(Arg) + L-arginine + ATP = L-arginyl-tRNA(Arg) + AMP + diphosphate. The chain is Arginine--tRNA ligase from Anaeromyxobacter dehalogenans (strain 2CP-1 / ATCC BAA-258).